We begin with the raw amino-acid sequence, 88 residues long: Sec-independent protein translocase protein TatA (88 aa).

The helical transmembrane segment at 1–21 threads the bilayer; sequence MGGIGIWQLAIITVIVILLFG. Residues 46–88 are disordered; that stretch reads DNDKDSTQVDDKDSTQVDDNAKQPSNKKVEENIKEQSKEKDRA.

The protein belongs to the TatA/E family. The Tat system comprises two distinct complexes: a TatABC complex, containing multiple copies of TatA, TatB and TatC subunits, and a separate TatA complex, containing only TatA subunits. Substrates initially bind to the TatABC complex, which probably triggers association of the separate TatA complex to form the active translocon.

It localises to the cell inner membrane. In terms of biological role, part of the twin-arginine translocation (Tat) system that transports large folded proteins containing a characteristic twin-arginine motif in their signal peptide across membranes. TatA could form the protein-conducting channel of the Tat system. This Psychromonas ingrahamii (strain DSM 17664 / CCUG 51855 / 37) protein is Sec-independent protein translocase protein TatA.